Reading from the N-terminus, the 132-residue chain is HLA class I histocompatibility antigen protein P5 (132 aa).

Expressed in lymphoid tissues; Detected in spleen as well as in B-cell lines, NK cell lines and activated lymphocytes.

The polypeptide is HLA class I histocompatibility antigen protein P5 (HCP5) (Homo sapiens (Human)).